We begin with the raw amino-acid sequence, 156 residues long: Mediator of RNA polymerase II transcription subunit 28 (156 aa).

The disordered stretch occupies residues 1-38; it reads MDYQQKPPQSSDPSPSPPDRPPGIRSPETPSNNQNNDI. Residues 104 to 156 adopt a coiled-coil conformation; sequence PSRAESLKKDIAVMEEELKTKDELIKKHMRLFQESQKLVKEQIEKHRDELEKV.

The protein belongs to the Mediator complex subunit 28 family. Dimers. Component of the Mediator complex. Interacts with GEBPL.

The protein resides in the nucleus. In terms of biological role, component of the Mediator complex, a coactivator involved in the regulated transcription of nearly all RNA polymerase II-dependent genes. Mediator functions as a bridge to convey information from gene-specific regulatory proteins to the basal RNA polymerase II transcription machinery. The Mediator complex, having a compact conformation in its free form, is recruited to promoters by direct interactions with regulatory proteins and serves for the assembly of a functional pre-initiation complex with RNA polymerase II and the general transcription factors. This chain is Mediator of RNA polymerase II transcription subunit 28, found in Arabidopsis thaliana (Mouse-ear cress).